We begin with the raw amino-acid sequence, 217 residues long: Protein LURP-one-related 15 (217 aa).

An N-acetylmethionine modification is found at M1.

The protein belongs to the LOR family.

Functionally, might be related to the phospholipid scramblase and tubby-like superfamily of membrane tethered transcription factors. The polypeptide is Protein LURP-one-related 15 (Arabidopsis thaliana (Mouse-ear cress)).